The primary structure comprises 63 residues: Defensin-like protein 278 (63 aa).

The first 15 residues, 1–15 (MSLVYMYMYIGVVMS), serve as a signal peptide directing secretion. 3 cysteine pairs are disulfide-bonded: Cys-31–Cys-48, Cys-37–Cys-53, and Cys-41–Cys-55.

The protein belongs to the DEFL family.

The protein localises to the secreted. This Arabidopsis thaliana (Mouse-ear cress) protein is Defensin-like protein 278.